The following is a 396-amino-acid chain: Phosphopentomutase (396 aa).

6 residues coordinate Mn(2+): Asp13, Asp288, His293, Asp329, His330, and His341.

It belongs to the phosphopentomutase family. It depends on Mn(2+) as a cofactor.

The protein localises to the cytoplasm. It carries out the reaction 2-deoxy-alpha-D-ribose 1-phosphate = 2-deoxy-D-ribose 5-phosphate. The enzyme catalyses alpha-D-ribose 1-phosphate = D-ribose 5-phosphate. Its pathway is carbohydrate degradation; 2-deoxy-D-ribose 1-phosphate degradation; D-glyceraldehyde 3-phosphate and acetaldehyde from 2-deoxy-alpha-D-ribose 1-phosphate: step 1/2. Functionally, isomerase that catalyzes the conversion of deoxy-ribose 1-phosphate (dRib-1-P) and ribose 1-phosphate (Rib-1-P) to deoxy-ribose 5-phosphate (dRib-5-P) and ribose 5-phosphate (Rib-5-P), respectively. The protein is Phosphopentomutase of Clostridium beijerinckii (strain ATCC 51743 / NCIMB 8052) (Clostridium acetobutylicum).